Here is a 207-residue protein sequence, read N- to C-terminus: Ribosomal RNA small subunit methyltransferase G (207 aa).

S-adenosyl-L-methionine-binding positions include Gly-71, Phe-76, 122–123 (AE), and Arg-135.

This sequence belongs to the methyltransferase superfamily. RNA methyltransferase RsmG family.

It localises to the cytoplasm. In terms of biological role, specifically methylates the N7 position of a guanine in 16S rRNA. This chain is Ribosomal RNA small subunit methyltransferase G, found in Cytophaga hutchinsonii (strain ATCC 33406 / DSM 1761 / CIP 103989 / NBRC 15051 / NCIMB 9469 / D465).